A 401-amino-acid polypeptide reads, in one-letter code: Thermophilic serine proteinase (401 aa).

An N-terminal signal peptide occupies residues 1–24 (MKFKAIVSLSLAVSMSLFPFLVEA). A propeptide spanning residues 25–121 (ASNDGVESPK…AEPNYLFNAA (97 aa)) is cleaved from the precursor. A Ca(2+)-binding site is contributed by Asp-126. Residues 133 to 399 (QYGPQNTYTD…YGRINSYNAV (267 aa)) enclose the Peptidase S8 domain. Residue Asp-160 is the Charge relay system of the active site. Ca(2+)-binding residues include Pro-168, Asp-169, Asp-171, Asp-179, Asp-184, and Asp-186. His-193 serves as the catalytic Charge relay system. Ca(2+) is bound by residues Glu-204, Asn-207, Thr-209, and Ile-211. Cys-258 and Cys-260 are joined by a disulfide. The Na(+) site is built by Tyr-297, Val-300, and Asp-323. The active-site Charge relay system is Ser-347.

It belongs to the peptidase S8 family. It depends on Ca(2+) as a cofactor. The cofactor is Na(+).

The protein localises to the secreted. The polypeptide is Thermophilic serine proteinase (Bacillus sp. (strain AK1)).